Reading from the N-terminus, the 153-residue chain is Ubiquitin-conjugating enzyme E2-18 kDa (153 aa).

One can recognise a UBC core domain in the interval 2–149; the sequence is AATRRLTREL…AEEFTKKNAE (148 aa). Cysteine 86 acts as the Glycyl thioester intermediate in catalysis.

It belongs to the ubiquitin-conjugating enzyme family.

It catalyses the reaction S-ubiquitinyl-[E1 ubiquitin-activating enzyme]-L-cysteine + [E2 ubiquitin-conjugating enzyme]-L-cysteine = [E1 ubiquitin-activating enzyme]-L-cysteine + S-ubiquitinyl-[E2 ubiquitin-conjugating enzyme]-L-cysteine.. It participates in protein modification; protein ubiquitination. Catalyzes the covalent attachment of ubiquitin to other proteins. This chain is Ubiquitin-conjugating enzyme E2-18 kDa (Ubc84D), found in Drosophila melanogaster (Fruit fly).